The primary structure comprises 167 residues: I-Kappa-B like protein F2 (167 aa).

ANK repeat units lie at residues 54–86 (HGKQ…DING), 91–121 (FGNT…NMGI), and 125–154 (LFKT…RCGV).

Belongs to the polydnaviridae I-Kappa-B-like protein family.

Suppresses the host immune response through NF-kappa-B inactivation. Possesses ankyrin repeat domains required for NF-kappa-B binding but lacks the regulatory regions required for dissociation from NF-kappa-B and degradation. Therefore, prevents host NF-kappa-B release and subsequent activation. This is I-Kappa-B like protein F2 (F3) from Microplitis demolitor bracovirus (isolate Webb) (MdBV).